The chain runs to 319 residues: ATP-dependent 6-phosphofructokinase (319 aa).

Residue G11 coordinates ATP. ADP is bound at residue R21–R25. ATP-binding positions include R72–C73 and G102–S105. D103 is a Mg(2+) binding site. T125 to D127 serves as a coordination point for substrate. The Proton acceptor role is filled by D127. ADP is bound at residue R154. Substrate-binding positions include R162 and M169–R171. ADP-binding positions include G185–E187, R211, and K213–H215. Substrate contacts are provided by residues E222, K243, and H249–R252.

Belongs to the phosphofructokinase type A (PFKA) family. ATP-dependent PFK group I subfamily. Prokaryotic clade 'B1' sub-subfamily. Homotetramer. Requires Mg(2+) as cofactor.

It localises to the cytoplasm. It carries out the reaction beta-D-fructose 6-phosphate + ATP = beta-D-fructose 1,6-bisphosphate + ADP + H(+). It functions in the pathway carbohydrate degradation; glycolysis; D-glyceraldehyde 3-phosphate and glycerone phosphate from D-glucose: step 3/4. Allosterically activated by ADP and other diphosphonucleosides, and allosterically inhibited by phosphoenolpyruvate. Catalyzes the phosphorylation of D-fructose 6-phosphate to fructose 1,6-bisphosphate by ATP, the first committing step of glycolysis. The polypeptide is ATP-dependent 6-phosphofructokinase (Finegoldia magna (strain ATCC 29328 / DSM 20472 / WAL 2508) (Peptostreptococcus magnus)).